The following is a 256-amino-acid chain: Calsenilin (256 aa).

The disordered stretch occupies residues 1–30 (MQRAKEVMKVSDGSLLGEPGRTPLSKKEGV). Serine 14 bears the Phosphoserine mark. Residue lysine 26 forms a Glycyl lysine isopeptide (Lys-Gly) (interchain with G-Cter in SUMO1) linkage. 2 S-palmitoyl cysteine lipidation sites follow: cysteine 45 and cysteine 46. Serine 60 and serine 63 each carry phosphoserine. Positions 67 to 123 (LELSAVRHQPEGLDQLQAQTKFTKKELQSLYRGFKNECPTGLVDEDTFKLIYSQFFP) constitute an EF-hand 1; degenerate domain. Lysine 90 is covalently cross-linked (Glycyl lysine isopeptide (Lys-Gly) (interchain with G-Cter in SUMO1)). EF-hand domains lie at 126–161 (DATT…LLRG), 162–197 (TVHE…IYDM), and 210–245 (APLE…DENI). Residues aspartate 175, asparagine 177, aspartate 179, tyrosine 181, glutamate 186, aspartate 223, asparagine 225, aspartate 227, and glutamate 234 each coordinate Ca(2+). Residues 243–256 (ENIMSSMQLFENVI) form an interaction with KCND2 region.

This sequence belongs to the recoverin family. As to quaternary structure, binds to DNA as a homomultimer. Dimerization is induced by binding to calcium. Interacts with the C-terminus of PSEN1 and PSEN2 and with PSEN2 CTF subunit. Associates with KCN1. Component of heteromultimeric potassium channels. Identified in potassium channel complexes containing KCND1, KCND2, KCND3, KCNIP1, KCNIP2, KCNIP3, KCNIP4, DPP6 and DPP10. Interacts with KCND2 and KCND3. In terms of processing, palmitoylated. Palmitoylation enhances association with the plasma membrane. Post-translationally, proteolytically cleaved by caspase-3.

Its subcellular location is the cytoplasm. It is found in the cell membrane. It localises to the endoplasmic reticulum. The protein resides in the golgi apparatus. The protein localises to the nucleus. Functionally, regulatory subunit of Kv4/D (Shal)-type voltage-gated rapidly inactivating A-type potassium channels, such as KCND2/Kv4.2 and KCND3/Kv4.3. Modulates channel expression at the cell membrane, gating characteristics, inactivation kinetics and rate of recovery from inactivation in a calcium-dependent and isoform-specific manner. May play a role in the regulation of PSEN2 proteolytic processing and apoptosis. Together with PSEN2 involved in modulation of amyloid-beta formation. Its function is as follows. Calcium-dependent transcriptional repressor that binds to the DRE element of genes including PDYN and FOS. Affinity for DNA is reduced upon binding to calcium and enhanced by binding to magnesium. Seems to be involved in nociception. The sequence is that of Calsenilin (KCNIP3) from Bos taurus (Bovine).